The chain runs to 302 residues: MAHATPQGVKLLNGWKRPGRFDKGLGAQLPEAYRKFWREWKLTTPAAVHYIPKEQQWERDEVTHAIKPVQNIPLPLIDTPESHRGIWGGEAVIKGFQKREQTKRRVPHFWVPNLRRSVVHSHVLDCYMSVVVTERTLEQIHECHGFDHYLLKNRACDLRSALALKLKREVLQALQNGVPALADEPERQQEVLKEYRRYLEPYTPEEIDWYGHTYLEAIRKLQKQLREAEKVVPHKLEFRGKLIEQLRQAGISEAGKLEKPDALAAESSVEHKDSDIEALTKLESSPSSSWLSKINPFGKKET.

This sequence belongs to the bacterial ribosomal protein bL28 family. As to quaternary structure, component of the mitochondrial ribosome large subunit (39S) which comprises a 16S rRNA and about 50 distinct proteins.

It is found in the mitochondrion. The polypeptide is Large ribosomal subunit protein bL28m (mRpL28) (Drosophila melanogaster (Fruit fly)).